The sequence spans 1369 residues: Xanthine dehydrogenase (1369 aa).

One can recognise a 2Fe-2S ferredoxin-type domain in the interval Gly20 to Ile106. Positions 58, 63, 66, 88, 128, 131, 164, and 166 each coordinate [2Fe-2S] cluster. One can recognise an FAD-binding PCMH-type domain in the interval Asn265 to Pro450. Residues Leu293–Val300, Phe373, Ser383–Asn387, Asp396, Leu440, and Lys458 each bind FAD. Mo-molybdopterin contacts are provided by Gln804 and Phe835. Positions 839 and 917 each coordinate substrate. Arg949 lines the Mo-molybdopterin pocket. Residues Phe951 and Thr1047 each contribute to the substrate site. Ala1116 contributes to the Mo-molybdopterin binding site. Glu1305 (proton acceptor) is an active-site residue.

The protein belongs to the xanthine dehydrogenase family. Homodimer. It depends on [2Fe-2S] cluster as a cofactor. The cofactor is FAD. Mo-molybdopterin serves as cofactor.

It catalyses the reaction xanthine + NAD(+) + H2O = urate + NADH + H(+). The enzyme catalyses hypoxanthine + NAD(+) + H2O = xanthine + NADH + H(+). Its function is as follows. Key enzyme involved in purine catabolism. Catalyzes the oxidation of hypoxanthine to xanthine and the oxidation of xanthine to urate. In Oryza sativa subsp. japonica (Rice), this protein is Xanthine dehydrogenase (XDH).